The chain runs to 69 residues: UPF0346 protein YuiB (69 aa).

Belongs to the UPF0346 family.

This Lactococcus lactis subsp. lactis (strain IL1403) (Streptococcus lactis) protein is UPF0346 protein YuiB (yuiB).